The chain runs to 385 residues: Serpin-Z1 (385 aa).

Residues 317–341 (GAEAAAATADGDCGCSLDFVEPPKK) are RCL.

It belongs to the serpin family.

In terms of biological role, probable serine protease inhibitor. The polypeptide is Serpin-Z1 (Arabidopsis thaliana (Mouse-ear cress)).